The following is a 325-amino-acid chain: Malate dehydrogenase (325 aa).

Position 9–15 (9–15) interacts with NAD(+); that stretch reads GAAGAIG. Residues R90 and R96 each coordinate substrate. NAD(+) contacts are provided by residues N103, Q110, and 127 to 129; that span reads VGN. Positions 129 and 160 each coordinate substrate. The active-site Proton acceptor is the H185.

Belongs to the LDH/MDH superfamily. MDH type 2 family.

The enzyme catalyses (S)-malate + NAD(+) = oxaloacetate + NADH + H(+). In terms of biological role, catalyzes the reversible oxidation of malate to oxaloacetate. In Rubrobacter xylanophilus (strain DSM 9941 / JCM 11954 / NBRC 16129 / PRD-1), this protein is Malate dehydrogenase.